Here is a 51-residue protein sequence, read N- to C-terminus: Large ribosomal subunit protein eL39y (51 aa).

Positions 1–21 (MPSHKSFMIKKKLGKKMRQNR) are disordered. Basic residues predominate over residues 7 to 19 (FMIKKKLGKKMRQ).

Belongs to the eukaryotic ribosomal protein eL39 family.

The protein is Large ribosomal subunit protein eL39y (RPL39B) of Arabidopsis thaliana (Mouse-ear cress).